We begin with the raw amino-acid sequence, 167 residues long: SsrA-binding protein (167 aa).

Residues His144 to Gln167 form a disordered region. The span at Lys146 to Arg160 shows a compositional bias: basic and acidic residues.

This sequence belongs to the SmpB family.

The protein resides in the cytoplasm. In terms of biological role, required for rescue of stalled ribosomes mediated by trans-translation. Binds to transfer-messenger RNA (tmRNA), required for stable association of tmRNA with ribosomes. tmRNA and SmpB together mimic tRNA shape, replacing the anticodon stem-loop with SmpB. tmRNA is encoded by the ssrA gene; the 2 termini fold to resemble tRNA(Ala) and it encodes a 'tag peptide', a short internal open reading frame. During trans-translation Ala-aminoacylated tmRNA acts like a tRNA, entering the A-site of stalled ribosomes, displacing the stalled mRNA. The ribosome then switches to translate the ORF on the tmRNA; the nascent peptide is terminated with the 'tag peptide' encoded by the tmRNA and targeted for degradation. The ribosome is freed to recommence translation, which seems to be the essential function of trans-translation. The sequence is that of SsrA-binding protein from Synechococcus sp. (strain CC9902).